An 864-amino-acid polypeptide reads, in one-letter code: Protein 4.1 (864 aa).

2 stretches are compositionally biased toward polar residues: residues methionine 1–histidine 16 and asparagine 27–threonine 41. Disordered regions lie at residues methionine 1 to leucine 122, glutamate 136 to isoleucine 170, and isoleucine 182 to lysine 202. Serine 14 bears the Phosphoserine mark. Threonine 60 carries the phosphothreonine; by CDK1 modification. Positions proline 61 to glutamate 75 are enriched in basic and acidic residues. Low complexity predominate over residues serine 76 to leucine 87. Phosphoserine occurs at positions 84, 85, 95, 104, 121, 149, 151, 152, 188, and 191. The span at glutamate 101–glutamate 117 shows a compositional bias: basic and acidic residues. Polar residues predominate over residues serine 149–alanine 158. Residues isoleucine 182–alanine 199 show a composition bias toward basic and acidic residues. The 282-residue stretch at methionine 210–serine 491 folds into the FERM domain. Tyrosine 222 carries the post-translational modification Phosphotyrosine. Threonine 378 carries the post-translational modification Phosphothreonine. Positions threonine 494–tryptophan 614 are hydrophilic. Disordered stretches follow at residues arginine 518–glycine 572 and lysine 586–threonine 611. 4 positions are modified to phosphoserine: serine 521, serine 540, serine 542, and serine 555. The span at alanine 587 to aspartate 600 shows a compositional bias: basic and acidic residues. The segment covering glutamate 601–proline 610 has biased composition (acidic residues). Residues lysine 615–proline 713 are spectrin--actin-binding. Tyrosine 660 is modified (phosphotyrosine; by EGFR). Phosphoserine occurs at positions 664, 674, 684, and 709. At serine 712 the chain carries Phosphoserine; by CDK1. The tract at residues phenylalanine 714–glutamate 864 is C-terminal (CTD). Residues threonine 736 and threonine 859 each carry the phosphothreonine modification.

Binds with a high affinity to glycophorin and with lower affinity to band III protein. Associates with the nuclear mitotic apparatus. Interacts with calmodulin. Interacts with CPAP. Interacts with DLG1. Also found to associate with contractile apparatus and tight junctions. Interacts with NUMA1; this interaction is negatively regulated by CDK1 during metaphase and promotes anaphase-specific localization of NUMA1 in symmetrically dividing cells. Interacts with ATP2B1; regulates small intestinal calcium absorption through regulation of membrane expression of ATP2B1. In terms of processing, phosphorylated at multiple sites by different protein kinases and each phosphorylation event selectively modulates the protein's functions. Post-translationally, phosphorylation on Tyr-660 reduces the ability of 4.1 to promote the assembly of the spectrin/actin/4.1 ternary complex. O-glycosylated; contains N-acetylglucosamine side chains in the C-terminal domain.

It localises to the cytoplasm. The protein resides in the cytoskeleton. Its subcellular location is the cell cortex. The protein localises to the nucleus. Functionally, protein 4.1 is a major structural element of the erythrocyte membrane skeleton. It plays a key role in regulating membrane physical properties of mechanical stability and deformability by stabilizing spectrin-actin interaction. Recruits DLG1 to membranes. Required for dynein-dynactin complex and NUMA1 recruitment at the mitotic cell cortex during anaphase. In Homo sapiens (Human), this protein is Protein 4.1.